A 391-amino-acid chain; its full sequence is Adaptive-response sensory kinase SasA (391 aa).

The region spanning 169–391 (MLAHDLRSPL…CFHFTLPVCR (223 aa)) is the Histidine kinase domain. His172 carries the phosphohistidine; by autocatalysis modification.

As to quaternary structure, homooligomerizes. Interacts with KaiC. Participates in the KaiABC clock complex, whose core is composed of a KaiC homohexamer, 6 KaiB and up to 6 KaiA dimers. SasA and KaiB(fs) compete to bind to KaiC.

It carries out the reaction ATP + protein L-histidine = ADP + protein N-phospho-L-histidine.. Its function is as follows. Member of the two-component regulatory system SasA/RpaA involved in genome-wide circadian gene expression. One of several clock output pathways. Participates in the Kai clock protein complex, the main circadian regulator in cyanobacteria, via its interaction with KaiC. KaiC enhances the autophosphorylation activity of SasA, which then transfers its phosphate group to RpaA to activate it. In addition to its output function, recruits fold-shifted KaiB (KaiB(fs)) to KaiC to cooperatively form the KaiB(6):KaiC(6) complex (independent of SasA kinase activity). Required for robustness of the circadian rhythm of gene expression and is involved in clock output, also required for adaptation to light/dark cycles. The polypeptide is Adaptive-response sensory kinase SasA (Rippkaea orientalis (strain PCC 8801 / RF-1) (Cyanothece sp. (strain PCC 8801))).